Here is a 58-residue protein sequence, read N- to C-terminus: COP9 signalosome complex subunit 6b (58 aa).

It belongs to the peptidase M67A family. CSN6 subfamily. As to quaternary structure, component of the CSN complex, probably composed of CSN1, CSN2, CSN3, CSN4, CSN5 (CSN5A or CSN5B), CSN6 (CSN6A or CSN6B), CSN7 and CSN8.

It localises to the cytoplasm. It is found in the nucleus. Component of the COP9 signalosome complex (CSN), a complex involved in various cellular and developmental processes such as photomorphogenesis and auxin and jasmonate responses. The CSN complex is an essential regulator of the ubiquitin (Ubl) conjugation pathway by mediating the deneddylation of the cullin subunits of SCF-type E3 ligase complexes, leading to decrease the Ubl ligase activity of SCF. It is involved in repression of photomorphogenesis in darkness by regulating the activity of COP1-containing Ubl ligase complexes. The protein is COP9 signalosome complex subunit 6b (CSN6B) of Brassica oleracea (Wild cabbage).